The sequence spans 252 residues: Putative pinene synthase (252 aa).

This sequence belongs to the terpene synthase family. Tpsa subfamily.

In Fragaria ananassa (Strawberry), this protein is Putative pinene synthase.